A 186-amino-acid chain; its full sequence is MDRYFFLQDASTVAKLLLGNLLIRKIDKKEIVVRIVETEAYMGITDSACHSYSGKRTNRTNAMYNIGGYSYVYIIYGMHHMFNIVTADKNNPQAVLIRSVEPVSPLLGEKCVLTNGPGKLTKFLNIDLAFNKVDLIGNNELFLQRGLNLDFNIVCSKRININYAQEDDINKLWRFYIEGNKFVSRC.

Belongs to the DNA glycosylase MPG family.

The polypeptide is Putative 3-methyladenine DNA glycosylase (Borreliella afzelii (strain PKo) (Borrelia afzelii)).